The following is a 90-amino-acid chain: Cell division topological specificity factor 2 (90 aa).

It belongs to the MinE family.

Its function is as follows. Prevents the cell division inhibition by proteins MinC and MinD at internal division sites while permitting inhibition at polar sites. This ensures cell division at the proper site by restricting the formation of a division septum at the midpoint of the long axis of the cell. This is Cell division topological specificity factor 2 from Syntrophomonas wolfei subsp. wolfei (strain DSM 2245B / Goettingen).